Reading from the N-terminus, the 39-residue chain is Histone H2A (39 aa).

The segment covering 1 to 18 (AGRGKQGGKVRAKAKTRS) has biased composition (basic residues). Positions 1-24 (AGRGKQGGKVRAKAKTRSSRAGLQ) are disordered. Position 5 is an N6-(2-hydroxyisobutyryl)lysine (K5). K5 carries the post-translational modification N6-acetyllysine. N6-(2-hydroxyisobutyryl)lysine; alternate is present on K9. K9 is subject to N6-lactoyllysine; alternate. Position 9 is an N6-succinyllysine (K9). Residues K13 and K15 each participate in a glycyl lysine isopeptide (Lys-Gly) (interchain with G-Cter in ubiquitin) cross-link. An N6-(2-hydroxyisobutyryl)lysine; alternate modification is found at K36.

Belongs to the histone H2A family. As to quaternary structure, the nucleosome is a histone octamer containing two molecules each of H2A, H2B, H3 and H4 assembled in one H3-H4 heterotetramer and two H2A-H2B heterodimers. The octamer wraps approximately 147 bp of DNA. Post-translationally, monoubiquitination of C-terminus gives a specific tag for epigenetic transcriptional repression. Following DNA double-strand breaks (DSBs), it is ubiquitinated through 'Lys-63' linkage of ubiquitin moieties.

Its subcellular location is the nucleus. The protein resides in the chromosome. Functionally, core component of nucleosome. Nucleosomes wrap and compact DNA into chromatin, limiting DNA accessibility to the cellular machineries which require DNA as a template. Histones thereby play a central role in transcription regulation, DNA repair, DNA replication and chromosomal stability. DNA accessibility is regulated via a complex set of post-translational modifications of histones, also called histone code, and nucleosome remodeling. Its function is as follows. Buforins are strong antimicrobial activities in vitro against a broad-spectrum of microorganisms including fungi. Buforin II is more potent than buforin I. The chain is Histone H2A from Bufo gargarizans (Asian toad).